The sequence spans 856 residues: Leucine--tRNA ligase (856 aa).

The short motif at 42–52 (PYPSGKLHMGH) is the 'HIGH' region element. A 'KMSKS' region motif is present at residues 615–619 (KMSKS). An ATP-binding site is contributed by Lys-618.

Belongs to the class-I aminoacyl-tRNA synthetase family.

Its subcellular location is the cytoplasm. The enzyme catalyses tRNA(Leu) + L-leucine + ATP = L-leucyl-tRNA(Leu) + AMP + diphosphate. The polypeptide is Leucine--tRNA ligase (Chromohalobacter salexigens (strain ATCC BAA-138 / DSM 3043 / CIP 106854 / NCIMB 13768 / 1H11)).